We begin with the raw amino-acid sequence, 174 residues long: Inosine/xanthosine triphosphatase (174 aa).

Asp68 contributes to the Mg(2+) binding site. Asp68–Ala69 serves as a coordination point for substrate.

The protein belongs to the YjjX NTPase family. In terms of assembly, homodimer. Requires Mg(2+) as cofactor. It depends on Mn(2+) as a cofactor.

The enzyme catalyses XTP + H2O = XDP + phosphate + H(+). It carries out the reaction ITP + H2O = IDP + phosphate + H(+). Phosphatase that hydrolyzes non-canonical purine nucleotides such as XTP and ITP to their respective diphosphate derivatives. Probably excludes non-canonical purines from DNA/RNA precursor pool, thus preventing their incorporation into DNA/RNA and avoiding chromosomal lesions. This Photobacterium profundum (strain SS9) protein is Inosine/xanthosine triphosphatase.